The primary structure comprises 315 residues: Energy-coupling factor transporter ATP-binding protein EcfA2 (315 aa).

An ABC transporter domain is found at Ile-31–Glu-275. Gly-68 to Ser-75 contributes to the ATP binding site.

The protein belongs to the ABC transporter superfamily. Energy-coupling factor EcfA family. In terms of assembly, forms a stable energy-coupling factor (ECF) transporter complex composed of 2 membrane-embedded substrate-binding proteins (S component), 2 ATP-binding proteins (A component) and 2 transmembrane proteins (T component).

The protein localises to the cell membrane. Functionally, ATP-binding (A) component of a common energy-coupling factor (ECF) ABC-transporter complex. Unlike classic ABC transporters this ECF transporter provides the energy necessary to transport a number of different substrates. In Mesoplasma florum (strain ATCC 33453 / NBRC 100688 / NCTC 11704 / L1) (Acholeplasma florum), this protein is Energy-coupling factor transporter ATP-binding protein EcfA2.